A 716-amino-acid polypeptide reads, in one-letter code: Polyribonucleotide nucleotidyltransferase (716 aa).

Residues Asp485 and Asp491 each coordinate Mg(2+). The KH domain maps to Pro552–Ile611. The region spanning Gly621 to Lys689 is the S1 motif domain. A compositionally biased stretch (basic and acidic residues) spans Lys689–Pro698. Positions Lys689–Glu716 are disordered. Residues Ala707–Glu716 are compositionally biased toward acidic residues.

It belongs to the polyribonucleotide nucleotidyltransferase family. Component of the RNA degradosome, which is a multiprotein complex involved in RNA processing and mRNA degradation. Mg(2+) is required as a cofactor.

Its subcellular location is the cytoplasm. The catalysed reaction is RNA(n+1) + phosphate = RNA(n) + a ribonucleoside 5'-diphosphate. Functionally, involved in mRNA degradation. Catalyzes the phosphorolysis of single-stranded polyribonucleotides processively in the 3'- to 5'-direction. This Idiomarina loihiensis (strain ATCC BAA-735 / DSM 15497 / L2-TR) protein is Polyribonucleotide nucleotidyltransferase.